A 104-amino-acid chain; its full sequence is UPF0473 protein LGAS_0424 (104 aa).

Belongs to the UPF0473 family.

The protein is UPF0473 protein LGAS_0424 of Lactobacillus gasseri (strain ATCC 33323 / DSM 20243 / BCRC 14619 / CIP 102991 / JCM 1131 / KCTC 3163 / NCIMB 11718 / NCTC 13722 / AM63).